A 645-amino-acid polypeptide reads, in one-letter code: Zinc finger and SCAN domain-containing protein 2 (645 aa).

Disordered stretches follow at residues 1–25, 37–75, and 193–230; these read MMAA…EEDR, DDSW…GPQG, and EMPE…HGEV. One can recognise an SCAN box domain in the interval 59–132; it reads SAGKGSPQEE…ALVEDLTQTL (74 aa). Residues 199–214 are compositionally biased toward basic and acidic residues; it reads SAQHSDGESDFERDAG. C2H2-type zinc fingers lie at residues 253 to 275, 281 to 303, 309 to 331, 337 to 359, 365 to 387, 393 to 415, 421 to 443, 449 to 471, 477 to 499, 505 to 527, 533 to 555, 561 to 583, 589 to 611, and 617 to 639; these read YECP…ERTH, YKCD…QTTH, YKCR…QRIH, FQCA…QRTH, YSCP…QGIH, YECK…QRIH, YKCT…RRTH, YQCS…RRTH, YKCG…QGMH, YECL…QRIH, YKCS…QQTH, YKCL…QRAH, YRCP…QRIH, and YKCP…QRTH.

The protein belongs to the krueppel C2H2-type zinc-finger protein family.

The protein localises to the nucleus. Functionally, may be involved in transcriptional regulation during the post-meiotic stages of spermatogenesis. In Pongo abelii (Sumatran orangutan), this protein is Zinc finger and SCAN domain-containing protein 2 (ZSCAN2).